The sequence spans 637 residues: Biosynthetic arginine decarboxylase (637 aa).

Lysine 101 bears the N6-(pyridoxal phosphate)lysine mark. Substrate is bound at residue 286-296; it reads FDVGGGLAVDY.

Belongs to the Orn/Lys/Arg decarboxylase class-II family. SpeA subfamily. It depends on Mg(2+) as a cofactor. Pyridoxal 5'-phosphate is required as a cofactor.

It catalyses the reaction L-arginine + H(+) = agmatine + CO2. It functions in the pathway amine and polyamine biosynthesis; agmatine biosynthesis; agmatine from L-arginine: step 1/1. Its function is as follows. Catalyzes the biosynthesis of agmatine from arginine. This is Biosynthetic arginine decarboxylase from Shewanella baltica (strain OS223).